The following is a 289-amino-acid chain: Protease HtpX homolog (289 aa).

A run of 2 helical transmembrane segments spans residues 8 to 28 (LALLAALSGLLIAISYWVIGG) and 29 to 49 (SSGLMIGIGLAAVTNLLSWYQ). Zn(2+) is bound at residue H132. The active site involves E133. H136 serves as a coordination point for Zn(2+). Transmembrane regions (helical) follow at residues 151–171 (VAGAISFLAQMVSYSLWFGGI) and 183–203 (LGVLLTVVLAPIAATIIQLAI). E208 is a binding site for Zn(2+).

This sequence belongs to the peptidase M48B family. Zn(2+) serves as cofactor.

The protein localises to the cell inner membrane. This Nostoc sp. (strain PCC 7120 / SAG 25.82 / UTEX 2576) protein is Protease HtpX homolog.